We begin with the raw amino-acid sequence, 251 residues long: NADPH-dependent oxidoreductase (251 aa).

The protein belongs to the flavin oxidoreductase frp family. FMN serves as cofactor.

In terms of biological role, reduces FMN, organic nitro compounds and disulfide DTNB. Involved in maintenance of the cellular redox state and the disulfide stress response. This Staphylococcus aureus (strain USA300) protein is NADPH-dependent oxidoreductase (nfrA).